A 356-amino-acid polypeptide reads, in one-letter code: MAKQPGLDFQSAKGGLGELKRRLLFVIGALIVFRIGSFIPIPGIDATVLAKLLEQQRGTIIEMFNMFSGGALSRASIFALGIMPYISASIIIQLLTVVHPALAEVKKEGEAGRRKISQYTRYGTLVLAIFQSIGIATGLPNMPGMQGLVMNPGFAFYFTAVVSLVTGTMFLMWLGEQITERGIGNGISIIIFAGIVAGLPPAVAHTIEQARQGDLHFLLLLLVAVLVFAVTFFVVFIERGQRRIVVNYAKRQQGRRVYAAQSTHLPLKVNMAGVIPAIFASSIILFPATIASWFGGGTGWNWLTTVSLYLQPGQPLYVLLYASAIIFFCFFYTALVFNPRETADNLKKSGAFVPGI.

Transmembrane regions (helical) follow at residues 24–44 (LFVI…IPGI), 77–97 (IFAL…LLTV), 125–145 (LVLA…MPGM), 154–174 (FAFY…LMWL), 183–203 (IGNG…PPAV), 217–237 (FLLL…VVFI), 274–294 (VIPA…ASWF), and 317–337 (YVLL…ALVF).

The protein belongs to the SecY/SEC61-alpha family. Component of the Sec protein translocase complex. Heterotrimer consisting of SecY, SecE and SecG subunits. The heterotrimers can form oligomers, although 1 heterotrimer is thought to be able to translocate proteins. Interacts with the ribosome. Interacts with SecDF, and other proteins may be involved. Interacts with SecA.

The protein localises to the cell membrane. Functionally, the central subunit of the protein translocation channel SecYEG. Consists of two halves formed by TMs 1-5 and 6-10. These two domains form a lateral gate at the front which open onto the bilayer between TMs 2 and 7, and are clamped together by SecE at the back. The channel is closed by both a pore ring composed of hydrophobic SecY resides and a short helix (helix 2A) on the extracellular side of the membrane which forms a plug. The plug probably moves laterally to allow the channel to open. The ring and the pore may move independently. The protein is Protein translocase subunit SecY of Buchnera aphidicola subsp. Acyrthosiphon kondoi (Acyrthosiphon kondoi symbiotic bacterium).